Reading from the N-terminus, the 609-residue chain is Albumin (609 aa).

An N-terminal signal peptide occupies residues 1–18 (MKWVTFISLLFLFSSAYS). Positions 19–24 (RGVFRR) are excised as a propeptide. Albumin domains follow at residues 19–210 (RGVF…DELR), 211–403 (DEGK…EFKP), and 404–601 (LVEE…KLVA). Histidine 27 lines the Cu cation pocket. Serine 29 carries the phosphoserine modification. Ca(2+)-binding residues include glutamate 30 and aspartate 37. Cysteine 77 and cysteine 86 are disulfide-bonded. Phosphoserine occurs at positions 82 and 89. Histidine 91 is a Zn(2+) binding site. Cystine bridges form between cysteine 99-cysteine 115, cysteine 114-cysteine 125, cysteine 148-cysteine 193, cysteine 192-cysteine 201, cysteine 224-cysteine 270, and cysteine 269-cysteine 277. Phosphothreonine is present on threonine 107. Position 229 is an N6-succinyllysine (lysine 229). Residue lysine 264 coordinates (4Z,15Z)-bilirubin IXalpha. Residue glutamate 268 participates in Ca(2+) binding. Histidine 271 and aspartate 273 together coordinate Zn(2+). 4 residues coordinate Ca(2+): aspartate 273, glutamate 276, aspartate 279, and aspartate 283. 8 disulfide bridges follow: cysteine 289–cysteine 303, cysteine 302–cysteine 313, cysteine 340–cysteine 385, cysteine 384–cysteine 393, cysteine 416–cysteine 462, cysteine 461–cysteine 472, cysteine 485–cysteine 501, and cysteine 500–cysteine 511. Serine 297 carries the post-translational modification Phosphoserine. Phosphoserine is present on serine 443. 2 positions are modified to phosphothreonine: threonine 444 and threonine 446. Lysine 460 is subject to N6-succinyllysine. Position 513 is a phosphoserine (serine 513). 2 cysteine pairs are disulfide-bonded: cysteine 538–cysteine 583 and cysteine 582–cysteine 591. An N6-succinyllysine modification is found at lysine 543. Position 558 is an N6-methyllysine (lysine 558). Threonine 570 is subject to Phosphothreonine. An N6-succinyllysine modification is found at lysine 588.

The protein belongs to the ALB/AFP/VDB family. Interacts with FCGRT; this interaction regulates ALB homeostasis. Interacts with TASOR. In plasma, occurs in a covalently-linked complex with chromophore-bound alpha-1-microglobulin; this interaction does not prevent fatty acid binding to ALB. In terms of processing, phosphorylated by FAM20C in the extracellular medium. In terms of tissue distribution, plasma.

The protein localises to the secreted. Binds water, Ca(2+), Na(+), K(+), fatty acids, hormones, bilirubin and drugs. Its main function is the regulation of the colloidal osmotic pressure of blood. Major zinc transporter in plasma, typically binds about 80% of all plasma zinc. Major calcium and magnesium transporter in plasma, binds approximately 45% of circulating calcium and magnesium in plasma. Potentially has more than two calcium-binding sites and might additionally bind calcium in a non-specific manner. The shared binding site between zinc and calcium at residue Asp-273 suggests a crosstalk between zinc and calcium transport in the blood. The rank order of affinity is zinc &gt; calcium &gt; magnesium. Binds to the bacterial siderophore enterobactin and inhibits enterobactin-mediated iron uptake of E.coli from ferric transferrin, and may thereby limit the utilization of iron and growth of enteric bacteria such as E.coli. Does not prevent iron uptake by the bacterial siderophore aerobactin. The chain is Albumin (ALB) from Pongo abelii (Sumatran orangutan).